Consider the following 445-residue polypeptide: Tubulin beta-2A chain (445 aa).

The MREI motif signature appears at Met1–Ile4. Gln11 provides a ligand contact to GTP. Residue Ser40 is modified to Phosphoserine. Lys58 is subject to N6-acetyllysine; alternate. Lys58 carries the N6-succinyllysine; alternate modification. A Glycyl lysine isopeptide (Lys-Gly) (interchain with G-Cter in ubiquitin); alternate cross-link involves residue Lys58. Residues Glu69, Ser138, Gly142, Thr143, and Gly144 each coordinate GTP. Glu69 contacts Mg(2+). Ser172 is subject to Phosphoserine; by CDK1. The GTP site is built by Asn204 and Asn226. Residues Thr285 and Thr290 each carry the phosphothreonine modification. Omega-N-methylarginine is present on Arg318. Lys324 is covalently cross-linked (Glycyl lysine isopeptide (Lys-Gly) (interchain with G-Cter in ubiquitin)). A disordered region spans residues Tyr422–Ala445. Residues Thr429–Ala445 are compositionally biased toward acidic residues. A 5-glutamyl polyglutamate modification is found at Glu438.

It belongs to the tubulin family. Interacts with ZNRF1. Part of a complex composed at least of ASH2L, EMSY, HCFC1, HSPA8, CCAR2, MATR3, MKI67, RBBP5, TUBB2A, WDR5 and ZNF335; this complex may have a histone H3-specific methyltransferase activity. Dimer of alpha and beta chains. A typical microtubule is a hollow water-filled tube with an outer diameter of 25 nm and an inner diameter of 15 nM. Alpha-beta heterodimers associate head-to-tail to form protofilaments running lengthwise along the microtubule wall with the beta-tubulin subunit facing the microtubule plus end conferring a structural polarity. Microtubules usually have 13 protofilaments but different protofilament numbers can be found in some organisms and specialized cells. Mg(2+) serves as cofactor. Some glutamate residues at the C-terminus are polyglutamylated, resulting in polyglutamate chains on the gamma-carboxyl group. Polyglutamylation plays a key role in microtubule severing by spastin (SPAST). SPAST preferentially recognizes and acts on microtubules decorated with short polyglutamate tails: severing activity by SPAST increases as the number of glutamates per tubulin rises from one to eight, but decreases beyond this glutamylation threshold. Glutamylation is also involved in cilia motility. In terms of processing, some glutamate residues at the C-terminus are monoglycylated but not polyglycylated due to the absence of functional TTLL10 in human. Monoglycylation is mainly limited to tubulin incorporated into cilia and flagella axonemes, which is required for their stability and maintenance. Flagella glycylation controls sperm motility. Both polyglutamylation and monoglycylation can coexist on the same protein on adjacent residues, and lowering glycylation levels increases polyglutamylation, and reciprocally. Post-translationally, phosphorylated on Ser-172 by CDK1 during the cell cycle, from metaphase to telophase, but not in interphase. This phosphorylation inhibits tubulin incorporation into microtubules. High expression in brain, where it represents 30% of all beta-tubulins.

It is found in the cytoplasm. The protein localises to the cytoskeleton. Its function is as follows. Tubulin is the major constituent of microtubules, a cylinder consisting of laterally associated linear protofilaments composed of alpha- and beta-tubulin heterodimers. Microtubules grow by the addition of GTP-tubulin dimers to the microtubule end, where a stabilizing cap forms. Below the cap, tubulin dimers are in GDP-bound state, owing to GTPase activity of alpha-tubulin. This is Tubulin beta-2A chain (TUBB2A) from Homo sapiens (Human).